Reading from the N-terminus, the 111-residue chain is Universal stress protein B (111 aa).

Transmembrane regions (helical) follow at residues 1-21 (MIST…NMAR) and 90-110 (FILT…LLIW).

This sequence belongs to the universal stress protein B family.

It is found in the cell inner membrane. This is Universal stress protein B from Escherichia fergusonii (strain ATCC 35469 / DSM 13698 / CCUG 18766 / IAM 14443 / JCM 21226 / LMG 7866 / NBRC 102419 / NCTC 12128 / CDC 0568-73).